The primary structure comprises 690 residues: Proprotein convertase subtilisin/kexin type 9 (690 aa).

An N-terminal signal peptide occupies residues 1 to 28 (MGTVRSRRLWWPLPLLLLLLLGPAGARA). The propeptide occupies 29-150 (QEDDDGDYEE…IEEDSYVFAQ (122 aa)). Position 36 is a sulfotyrosine (Tyr-36). Position 45 is a phosphoserine (Ser-45). The Inhibitor I9 domain occupies 75-147 (TYVVVLKEET…VDYIEEDSYV (73 aa)). Residues 153–459 (PWNLERITPA…GWQLFCRTVW (307 aa)) form the Peptidase S8 domain. Residues Asp-184 and His-224 each act as charge relay system in the active site. 2 disulfides stabilise this stretch: Cys-221-Cys-253 and Cys-321-Cys-356. Ser-384 serves as the catalytic Charge relay system. Residues 448–690 (GAGWQLFCRT…HLAQASQELQ (243 aa)) form a C-terminal domain region. 3 disulfide bridges follow: Cys-455-Cys-525, Cys-475-Cys-524, and Cys-484-Cys-507. A glycan (N-linked (GlcNAc...) asparagine) is linked at Asn-531. 6 disulfides stabilise this stretch: Cys-532-Cys-599, Cys-550-Cys-598, Cys-560-Cys-586, Cys-606-Cys-677, Cys-624-Cys-676, and Cys-633-Cys-652. Ser-686 carries the post-translational modification Phosphoserine.

This sequence belongs to the peptidase S8 family. In terms of assembly, monomer. Can self-associate to form dimers and higher multimers which may have increased LDLR degrading activity. The precursor protein but not the mature protein may form multimers. Interacts with APOB, VLDLR, LRP8/APOER2 and BACE1. The full-length immature form (pro-PCSK9) interacts with SCNN1A, SCNN1B and SCNN1G. The pro-PCSK9 form (via C-terminal domain) interacts with LDLR. Interacts (via the C-terminal domain) with ANXA2 (via repeat Annexin 1); the interaction inhibits the degradation of LDLR. Ca(2+) is required as a cofactor. Post-translationally, cleavage by furin and PCSK5 generates a truncated inactive protein that is unable to induce LDLR degradation. Undergoes autocatalytic cleavage in the endoplasmic reticulum to release the propeptide from the N-terminus and the cleavage of the propeptide is strictly required for its maturation and activation. The cleaved propeptide however remains associated with the catalytic domain through non-covalent interactions, preventing potential substrates from accessing its active site. As a result, it is secreted from cells as a propeptide-containing, enzymatically inactive protein. In terms of processing, phosphorylation protects the propeptide against proteolysis.

The protein localises to the cytoplasm. Its subcellular location is the secreted. It is found in the endosome. The protein resides in the lysosome. It localises to the cell surface. The protein localises to the endoplasmic reticulum. Its subcellular location is the golgi apparatus. Its activity is regulated as follows. Its proteolytic activity is autoinhibited by the non-covalent binding of the propeptide to the catalytic domain. Inhibited by EGTA. Crucial player in the regulation of plasma cholesterol homeostasis. Binds to low-density lipid receptor family members: low density lipoprotein receptor (LDLR), very low density lipoprotein receptor (VLDLR), apolipoprotein E receptor (LRP1/APOER) and apolipoprotein receptor 2 (LRP8/APOER2), and promotes their degradation in intracellular acidic compartments. Acts via a non-proteolytic mechanism to enhance the degradation of the hepatic LDLR through a clathrin LDLRAP1/ARH-mediated pathway. May prevent the recycling of LDLR from endosomes to the cell surface or direct it to lysosomes for degradation. Can induce ubiquitination of LDLR leading to its subsequent degradation. Inhibits intracellular degradation of APOB via the autophagosome/lysosome pathway in a LDLR-independent manner. Involved in the disposal of non-acetylated intermediates of BACE1 in the early secretory pathway. Inhibits epithelial Na(+) channel (ENaC)-mediated Na(+) absorption by reducing ENaC surface expression primarily by increasing its proteasomal degradation. Regulates neuronal apoptosis via modulation of LRP8/APOER2 levels and related anti-apoptotic signaling pathways. The chain is Proprotein convertase subtilisin/kexin type 9 (PCSK9) from Lagothrix lagotricha (Brown woolly monkey).